A 780-amino-acid polypeptide reads, in one-letter code: Cyclin-F (780 aa).

Residues lysine 20–arginine 28 carry the Nuclear localization signal 1 motif. The F-box domain maps to asparagine 29–alanine 76. In terms of domain architecture, Cyclin N-terminal spans glutamine 288–isoleucine 405. 3 consecutive short sequence motifs (d box) follow at residues arginine 310–leucine 313, arginine 343–leucine 346, and arginine 349–leucine 352. Disordered regions lie at residues glutamine 544–serine 594, glutamine 651–proline 733, and cysteine 745–leucine 780. The Nuclear localization signal 2 signature appears at arginine 568 to arginine 574. Positions arginine 582–lysine 761 are PEST. Over residues phenylalanine 585 to serine 594 the composition is skewed to polar residues. Composition is skewed to low complexity over residues serine 695–serine 708 and serine 719–threonine 731. The D box 4 motif lies at arginine 762–leucine 765.

It belongs to the cyclin family. Cyclin AB subfamily. Component of the SCF(CCNF) complex consisting of CUL1, RBX1, SKP1 and CCNF. Interacts with SKP1. Interacts with CUL1. Interacts with CCNB1; interaction is required for nuclear localization of CCNB1. Interacts with CCP110; this interaction leads to CCP110 ubiquitination and degradation via the proteasome pathway. Interacts (via the Cyclin N-terminal domain) with MYBL2/BMYB. Interacts with FZR1/CDH1 (via N-terminus). Interacts with RRM2 (via Cy motif and when phosphorylated at 'Thr-33'); the interaction occurs exclusively in G2 and early M. Interacts with CDC6 (via Cy motif); the interaction takes place during G2 and M phase. In terms of processing, degraded when the spindle assembly checkpoint is activated during the G2-M transition. Degradation is not dependent on the proteasome or ubiquitin and depends on the C-terminal PEST sequence. Phosphorylated just before cells enter into mitosis. Post-translationally, ubiquitinated by the anaphase-promoting complex (APC/C); leading to its degradation by the proteasome.

The protein resides in the nucleus. The protein localises to the cytoplasm. It is found in the perinuclear region. It localises to the cytoskeleton. Its subcellular location is the microtubule organizing center. The protein resides in the centrosome. The protein localises to the centriole. In terms of biological role, substrate recognition component of a SCF (SKP1-CUL1-F-box protein) E3 ubiquitin-protein ligase complex which mediates the ubiquitination and subsequent proteasomal degradation of target proteins. The SCF(CCNF) E3 ubiquitin-protein ligase complex is an integral component of the ubiquitin proteasome system (UPS) and links proteasome degradation to the cell cycle. Mediates the substrate recognition and the proteasomal degradation of various target proteins involved in the regulation of cell cycle progression and in the maintenance of genome stability. Mediates the ubiquitination and subsequent proteasomal degradation of CP110 during G2 phase, thereby acting as an inhibitor of centrosome reduplication. In G2, mediates the ubiquitination and proteasomal degradation of CDC6, thereby suppressing DNA re-replication and preventing genome instability. Involved in the ubiquitination and degradation of the substrate adapter CDH1 of the anaphase-promoting complex (APC/C), thereby acting as an antagonist of APC/C in regulating G1 progression and S phase entry. May play a role in the G2 cell cycle checkpoint control after DNA damage, possibly by promoting the ubiquitination of MYBL2/BMYB. The protein is Cyclin-F (Ccnf) of Rattus norvegicus (Rat).